The primary structure comprises 613 residues: Activating transcription factor 3 (613 aa).

Disordered regions lie at residues 77–115 (RHFN…PSVQ) and 133–218 (KRKL…NKIA). The segment covering 85 to 105 (GQSHSQDSSHSSCSGSPLDSP) has biased composition (low complexity). Residues 138–147 (TCDSSSGSEQ) are compositionally biased toward polar residues. Over residues 158 to 175 (NHNGHSGSSNNYSGSMSN) the composition is skewed to low complexity. Over residues 178 to 191 (DLDDDCEESSDDDS) the composition is skewed to acidic residues. The 64-residue stretch at 205-268 (EDRRRRRRER…QKLVDMLKSH (64 aa)) folds into the bZIP domain. The interval 207–229 (RRRRRRERNKIAATKCRMKKRER) is basic motif. Positions 233-261 (LIKESEVLDTQNVELKNQVRQLETERQKL) are leucine-zipper. Residues 337–446 (PNGYCKPSPS…SSNATSSTTP (110 aa)) form a disordered region. Positions 356-368 (QQQQQQQQQQQPQ) are enriched in low complexity. The segment covering 369–389 (SLNPAGNNVIDQQHANPSPSL) has biased composition (polar residues). The span at 402 to 446 (GSASNHPSHNNNNNNNNSSGASSNTSNNNSNISSHSSNATSSTTP) shows a compositional bias: low complexity.

This sequence belongs to the bZIP family. ATF subfamily. Interacts with Jra/jun; the interaction enhances the DNA-binding activity of Atf3. Moderate expression in some regions of the larval nervous system, the ring gland and imaginal disks. High expression in larval gut, excretory malpighian tubules, salivary glands, and, to a lesser extent, the fat body where levels are approximately 2.5-fold less than the gut.

Its subcellular location is the nucleus. Its function is as follows. Transcription factor which binds to the cAMP response element (CRE). Regulates metabolic and innate immune homeostasis, possibly by controlling appropriate expression of genes involved in peritrophic matrix composition and ensuring the normal digestive and immune function of the gut. Required for the expression of odorant receptors Or43b and Or47b. The protein is Activating transcription factor 3 of Drosophila melanogaster (Fruit fly).